We begin with the raw amino-acid sequence, 174 residues long: Shikimate kinase (174 aa).

Residue 15–20 coordinates ATP; the sequence is GTGKST. Mg(2+) is bound at residue S19. 3 residues coordinate substrate: D37, R61, and G82. R120 contributes to the ATP binding site. Residue R138 participates in substrate binding.

Belongs to the shikimate kinase family. Monomer. Requires Mg(2+) as cofactor.

The protein localises to the cytoplasm. The catalysed reaction is shikimate + ATP = 3-phosphoshikimate + ADP + H(+). Its pathway is metabolic intermediate biosynthesis; chorismate biosynthesis; chorismate from D-erythrose 4-phosphate and phosphoenolpyruvate: step 5/7. Its function is as follows. Catalyzes the specific phosphorylation of the 3-hydroxyl group of shikimic acid using ATP as a cosubstrate. The protein is Shikimate kinase of Staphylococcus aureus (strain MRSA252).